Here is a 676-residue protein sequence, read N- to C-terminus: DNA ligase (676 aa).

NAD(+) is bound by residues D32 to D36, S81 to L82, and E113. The N6-AMP-lysine intermediate role is filled by K115. Residues R136, E173, K291, and K315 each coordinate NAD(+). Zn(2+)-binding residues include C409, C412, C427, and C433. The BRCT domain occupies S595–Q676.

The protein belongs to the NAD-dependent DNA ligase family. LigA subfamily. Mg(2+) serves as cofactor. The cofactor is Mn(2+).

The enzyme catalyses NAD(+) + (deoxyribonucleotide)n-3'-hydroxyl + 5'-phospho-(deoxyribonucleotide)m = (deoxyribonucleotide)n+m + AMP + beta-nicotinamide D-nucleotide.. Functionally, DNA ligase that catalyzes the formation of phosphodiester linkages between 5'-phosphoryl and 3'-hydroxyl groups in double-stranded DNA using NAD as a coenzyme and as the energy source for the reaction. It is essential for DNA replication and repair of damaged DNA. The protein is DNA ligase of Buchnera aphidicola subsp. Acyrthosiphon pisum (strain Tuc7).